The primary structure comprises 467 residues: Variant surface glycoprotein 7 (467 aa).

Residues 77 to 87 (TIAAGATNTKL) are compositionally biased toward polar residues. The interval 77 to 133 (TIAAGATNTKLSGHHPNQGRRGRRRSSSARPNNSKGNSPSKRAGGAVRGETPASGRL) is disordered. Over residues 93–103 (NQGRRGRRRSS) the composition is skewed to basic residues. Residues 107 to 116 (PNNSKGNSPS) are compositionally biased toward polar residues. 2 N-linked (GlcNAc...) asparagine glycosylation sites follow: N108 and N252. Residues 382–407 (AEKVENPRSQGNPETAENKKEGGNTA) are disordered. A glycan (N-linked (GlcNAc...) asparagine) is linked at N416. A lipid anchor (GPI-anchor amidated aspartate) is attached at D444. A propeptide spans 445–467 (SSFLLSKQFALSVVSAAFAALLF) (removed in mature form).

It localises to the cell membrane. In terms of biological role, VSG forms a coat on the surface of the parasite. The trypanosome evades the immune response of the host by expressing a series of antigenically distinct VSGs from an estimated 1000 VSG genes. The polypeptide is Variant surface glycoprotein 7 (Trypanosoma brucei rhodesiense).